An 80-amino-acid chain; its full sequence is WAP four-disulfide core domain protein 15B (80 aa).

Residues 1 to 20 (MKLLGLSLLAVTILLCCNMA) form the signal peptide. The WAP domain occupies 29–76 (VFSKPGYCPEYRVPCPFVLIPKCRRDKGCKDALKCCFFYCQMRCVDPW). Cystine bridges form between Cys36–Cys64, Cys43–Cys68, Cys51–Cys63, and Cys57–Cys72.

Constitutively expressed in kidney and epididymis.

The protein localises to the secreted. Antibacterial protein which inhibits the growth of E.coli and S.aureus. The chain is WAP four-disulfide core domain protein 15B (Wfdc15b) from Mus musculus (Mouse).